We begin with the raw amino-acid sequence, 404 residues long: MLKCKQPGARFIHGAVHLPSGQIVFHTIHSPTLASALGLPGENVPIPALFRASGLNVRESLPMTNMRAPIISLARLILAPNPYILEGQLTVGMTQDNGIPVLFARPVIEVKSGPESNIKASSQLMIAEDSCLNQIAPFSASEHPAFSMVESVKRVRVDEGANTRRTIRDILEIPVTVLSSLQLSPTKSILKKAPEPPPPEPQATFDAAPYARIFYDIGRQVPKLGNAPAAQVSNVLIANRSHNSLRLVPNPDLLPLQHLYLKHVVLKSLNLENIVQDFEAIFTSPSDTISEAETKAFEKLVEQAKNTVENIVFCLNSICSTSTLPDVVPDVNNPNISLALEKYFLMFPPSGTIMRNVRFATPIVRLLCQGAELGTMAQFLGKYIKVKKETGMYTLVKLYYLLRI.

It belongs to the lymphocryptovirus BTRF1 family.

This is an uncharacterized protein from Homo sapiens (Human).